The chain runs to 224 residues: Urease accessory protein UreF (224 aa).

This sequence belongs to the UreF family. UreD, UreF and UreG form a complex that acts as a GTP-hydrolysis-dependent molecular chaperone, activating the urease apoprotein by helping to assemble the nickel containing metallocenter of UreC. The UreE protein probably delivers the nickel.

The protein resides in the cytoplasm. Functionally, required for maturation of urease via the functional incorporation of the urease nickel metallocenter. This chain is Urease accessory protein UreF, found in Pseudomonas fluorescens (strain SBW25).